The primary structure comprises 419 residues: Squamosa promoter-binding-like protein 2 (419 aa).

The disordered stretch occupies residues 77-96 (SAEVRTHNFTSETGESLPGE). The segment at 166 to 243 (TPHCQVEGCN…SDHNARRRKP (78 aa)) adopts an SBP-type zinc-finger fold. Positions 169, 174, 191, 194, 210, 213, 217, and 229 each coordinate Zn(2+). The Bipartite nuclear localization signal motif lies at 226–242 (KRSCRRRLSDHNARRRK). Residues 230 to 249 (RRRLSDHNARRRKPNPGRTY) are disordered.

Zn(2+) serves as cofactor.

Its subcellular location is the nucleus. Trans-acting factor that binds specifically to the consensus nucleotide sequence 5'-TNCGTACAA-3'. This is Squamosa promoter-binding-like protein 2 (SPL2) from Arabidopsis thaliana (Mouse-ear cress).